The sequence spans 236 residues: Diaminopimelate epimerase (236 aa).

Positions 8 and 55 each coordinate substrate. Catalysis depends on cysteine 64, which acts as the Proton donor. Substrate is bound by residues 65 to 66 (GN), asparagine 159, and 176 to 177 (ER). The active-site Proton acceptor is the cysteine 186. A substrate-binding site is contributed by 187 to 188 (GT).

The protein belongs to the diaminopimelate epimerase family. In terms of assembly, probably forms homotrimers.

Its subcellular location is the cytoplasm. The catalysed reaction is (2S,6S)-2,6-diaminopimelate = meso-2,6-diaminopimelate. It participates in amino-acid biosynthesis; L-lysine biosynthesis via DAP pathway; DL-2,6-diaminopimelate from LL-2,6-diaminopimelate: step 1/1. Functionally, catalyzes the stereoinversion of LL-2,6-diaminopimelate (L,L-DAP) to meso-diaminopimelate (meso-DAP), a precursor of L-lysine and an essential component of the bacterial peptidoglycan. Also catalyzes the racemization of certain amino acids, including Lys, with low efficiency. This Thermotoga maritima (strain ATCC 43589 / DSM 3109 / JCM 10099 / NBRC 100826 / MSB8) protein is Diaminopimelate epimerase.